A 222-amino-acid chain; its full sequence is Probable GTP-binding protein EngB (222 aa).

In terms of domain architecture, EngB-type G spans 22 to 197; the sequence is TSAEIAFVGR…ETVVAGWFAG (176 aa). Ser37 and Thr59 together coordinate Mg(2+). A disordered region spans residues 201-222; the sequence is RQADELTDGEPDDRTPDPDSAS. Over residues 212–222 the composition is skewed to basic and acidic residues; that stretch reads DDRTPDPDSAS.

It belongs to the TRAFAC class TrmE-Era-EngA-EngB-Septin-like GTPase superfamily. EngB GTPase family. Mg(2+) is required as a cofactor.

Functionally, necessary for normal cell division and for the maintenance of normal septation. The chain is Probable GTP-binding protein EngB from Laribacter hongkongensis (strain HLHK9).